A 339-amino-acid polypeptide reads, in one-letter code: Non-homologous end joining protein Ku (339 aa).

The region spanning 10–187 (ITFGLVNIPV…LPKATTGKPT (178 aa)) is the Ku domain. Disordered regions lie at residues 230–251 (DSGK…RQGA) and 263–339 (SLGQ…KHAA). Residues 267-277 (RGKEDKEDATP) are compositionally biased toward basic and acidic residues. Over residues 278–289 (ARRKAPARHAAA) the composition is skewed to basic residues. Over residues 290–310 (RKQPAAKRAATPPAKRASTAA) the composition is skewed to low complexity.

Belongs to the prokaryotic Ku family. In terms of assembly, homodimer. Interacts with LigD.

Functionally, with LigD forms a non-homologous end joining (NHEJ) DNA repair enzyme, which repairs dsDNA breaks with reduced fidelity. Binds linear dsDNA with 5'- and 3'- overhangs but not closed circular dsDNA nor ssDNA. Recruits and stimulates the ligase activity of LigD. The protein is Non-homologous end joining protein Ku of Cupriavidus necator (strain ATCC 17699 / DSM 428 / KCTC 22496 / NCIMB 10442 / H16 / Stanier 337) (Ralstonia eutropha).